The following is a 451-amino-acid chain: UPF0210 protein lin0538 (451 aa).

Belongs to the UPF0210 family. As to quaternary structure, homodimer.

The protein is UPF0210 protein lin0538 of Listeria innocua serovar 6a (strain ATCC BAA-680 / CLIP 11262).